The following is an 87-amino-acid chain: Small ribosomal subunit protein eS21 (87 aa).

It belongs to the eukaryotic ribosomal protein eS21 family. Component of the small ribosomal subunit. Mature ribosomes consist of a small (40S) and a large (60S) subunit. The 40S subunit contains about 33 different proteins and 1 molecule of RNA (18S). The 60S subunit contains about 49 different proteins and 3 molecules of RNA (25S, 5.8S and 5S).

The protein resides in the cytoplasm. Required for the processing of the 20S rRNA-precursor to mature 18S rRNA in a late step of the maturation of 40S ribosomal subunits. Has a physiological role leading to 18S rRNA stability. The polypeptide is Small ribosomal subunit protein eS21 (RPS21) (Eremothecium gossypii (strain ATCC 10895 / CBS 109.51 / FGSC 9923 / NRRL Y-1056) (Yeast)).